We begin with the raw amino-acid sequence, 97 residues long: MKKRGGRILWLVYLDSTIPKSRGRIIAKGVAVPKPTIQEVEEALRRLGYSYESYPEKKYPPLWFEERARGYFLVKSDEKPASIAAKVAEEIRRIRGQ.

It belongs to the SRP19 family. As to quaternary structure, part of the signal recognition particle protein translocation system, which is composed of SRP and FtsY. Archaeal SRP consists of a 7S RNA molecule of 300 nucleotides and two protein subunits: SRP54 and SRP19.

Its subcellular location is the cytoplasm. Its function is as follows. Involved in targeting and insertion of nascent membrane proteins into the cytoplasmic membrane. Binds directly to 7S RNA and mediates binding of the 54 kDa subunit of the SRP. This chain is Signal recognition particle 19 kDa protein, found in Pyrobaculum calidifontis (strain DSM 21063 / JCM 11548 / VA1).